The following is a 429-amino-acid chain: tRNA threonylcarbamoyladenosine dehydratase 1 (429 aa).

2 consecutive transmembrane segments (helical) span residues 3 to 23 (NNTW…TQLA) and 74 to 94 (EQYI…TMLI). A Phosphoserine modification is found at Ser-259. Residues 279 to 299 (LPELGTMPGIFGLSIATWILT) traverse the membrane as a helical segment.

This sequence belongs to the HesA/MoeB/ThiF family.

The protein localises to the mitochondrion outer membrane. Catalyzes the ATP-dependent dehydration of threonylcarbamoyladenosine at position 37 (t(6)A37) to form cyclic t(6)A37 (ct(6)A37) in tRNAs that read codons beginning with adenine. The sequence is that of tRNA threonylcarbamoyladenosine dehydratase 1 (TCD1) from Saccharomyces cerevisiae (strain ATCC 204508 / S288c) (Baker's yeast).